Consider the following 83-residue polypeptide: Cytochrome b559 subunit alpha (83 aa).

Residues 21-35 (VIHSITIPSLFIAGW) form a helical membrane-spanning segment. His-23 lines the heme pocket.

The protein belongs to the PsbE/PsbF family. Heterodimer of an alpha subunit and a beta subunit. PSII is composed of 1 copy each of membrane proteins PsbA, PsbB, PsbC, PsbD, PsbE, PsbF, PsbH, PsbI, PsbJ, PsbK, PsbL, PsbM, PsbT, PsbX, PsbY, PsbZ, Psb30/Ycf12, at least 3 peripheral proteins of the oxygen-evolving complex and a large number of cofactors. It forms dimeric complexes. Requires heme b as cofactor.

The protein localises to the plastid. It localises to the chloroplast thylakoid membrane. This b-type cytochrome is tightly associated with the reaction center of photosystem II (PSII). PSII is a light-driven water:plastoquinone oxidoreductase that uses light energy to abstract electrons from H(2)O, generating O(2) and a proton gradient subsequently used for ATP formation. It consists of a core antenna complex that captures photons, and an electron transfer chain that converts photonic excitation into a charge separation. This is Cytochrome b559 subunit alpha from Phalaenopsis aphrodite subsp. formosana (Moth orchid).